The chain runs to 508 residues: Histidine ammonia-lyase (508 aa).

The segment at residues 139–141 (ASG) is a cross-link (5-imidazolinone (Ala-Gly)). 2,3-didehydroalanine (Ser) is present on Ser-140.

This sequence belongs to the PAL/histidase family. In terms of processing, contains an active site 4-methylidene-imidazol-5-one (MIO), which is formed autocatalytically by cyclization and dehydration of residues Ala-Ser-Gly.

It is found in the cytoplasm. The catalysed reaction is L-histidine = trans-urocanate + NH4(+). Its pathway is amino-acid degradation; L-histidine degradation into L-glutamate; N-formimidoyl-L-glutamate from L-histidine: step 1/3. This Acidiphilium cryptum (strain JF-5) protein is Histidine ammonia-lyase.